A 297-amino-acid chain; its full sequence is Guanylate kinase (297 aa).

The 180-residue stretch at 4-183 (GKMIIISGPS…AVAKITDVLH (180 aa)) folds into the Guanylate kinase-like domain. 11–18 (GPSGVGKG) is an ATP binding site. Residues 204–297 (EQIVKEKYMY…EQKHYNNDEF (94 aa)) are unknown.

Belongs to the guanylate kinase family.

It localises to the cytoplasm. The enzyme catalyses GMP + ATP = GDP + ADP. Essential for recycling GMP and indirectly, cGMP. This is Guanylate kinase (gmk) from Mycoplasma mycoides subsp. mycoides SC (strain CCUG 32753 / NCTC 10114 / PG1).